The chain runs to 100 residues: Small ribosomal subunit protein uS14c (100 aa).

This sequence belongs to the universal ribosomal protein uS14 family. Part of the 30S ribosomal subunit.

It is found in the plastid. Binds 16S rRNA, required for the assembly of 30S particles. The sequence is that of Small ribosomal subunit protein uS14c from Aneura mirabilis (Parasitic liverwort).